A 365-amino-acid chain; its full sequence is Flagellar P-ring protein 2 (365 aa).

A signal peptide spans 1 to 19; that stretch reads MKKWIVMASLLLAALPAMS.

It belongs to the FlgI family. As to quaternary structure, the basal body constitutes a major portion of the flagellar organelle and consists of four rings (L,P,S, and M) mounted on a central rod.

It is found in the periplasm. It localises to the bacterial flagellum basal body. In terms of biological role, assembles around the rod to form the L-ring and probably protects the motor/basal body from shearing forces during rotation. The polypeptide is Flagellar P-ring protein 2 (Chromobacterium violaceum (strain ATCC 12472 / DSM 30191 / JCM 1249 / CCUG 213 / NBRC 12614 / NCIMB 9131 / NCTC 9757 / MK)).